Consider the following 303-residue polypeptide: MSFEVTGPPLVSPWMMLSMSEARNDIDETKIVIPGHSVCDAPQQFMRGHGTYVRDGEIVSSLSGVVQQLNRLLMVKTIKQRYAGEVGDVVVARVVEVQAKRWKCDVASRLHANLPLGSVLLPGGDFRRKDVEDEEKMSEFLKNGELICAEVQQVQHDGTLMLHTRNNKYGKLQQGILIKVPPHLIKKSKKHFHTLPYGMAVIIGCNGSVWVTPSLPETTLEEDGSHVHEFQIVPPDVRVTMVRIAACVRLLRDYSISIYLNSLTTCYEMSQPYEIKELAEQDTSSRLAYLIAARLLQELQQQK.

Residues 175 to 213 (GILIKVPPHLIKKSKKHFHTLPYGMAVIIGCNGSVWVTP) form the KH domain.

It belongs to the RRP4 family. As to quaternary structure, component of the RNA exosome complex. In terms of tissue distribution, ubiquitously expressed.

It is found in the nucleus. The protein resides in the nucleolus. It localises to the nucleoplasm. Non-catalytic component of the RNA exosome complex which has 3'-&gt;5' exoribonuclease activity and participates in a multitude of cellular RNA processing and degradation events. Involved in regulation of antisense ribosomal siRNA production. Involved in response to cold-warm shock. This Caenorhabditis elegans protein is Exosome complex component RRP4 homolog.